The chain runs to 111 residues: Cytochrome c (111 aa).

At A1 the chain carries N-acetylalanine. Positions 22, 25, and 26 each coordinate heme c. K80 is modified (N6,N6,N6-trimethyllysine). M88 is a heme c binding site. At K94 the chain carries N6,N6,N6-trimethyllysine.

Belongs to the cytochrome c family. Binds 1 heme c group covalently per subunit.

The protein resides in the mitochondrion intermembrane space. In terms of biological role, electron carrier protein. The oxidized form of the cytochrome c heme group can accept an electron from the heme group of the cytochrome c1 subunit of cytochrome reductase. Cytochrome c then transfers this electron to the cytochrome oxidase complex, the final protein carrier in the mitochondrial electron-transport chain. This chain is Cytochrome c, found in Vigna radiata var. radiata (Mung bean).